The following is a 425-amino-acid chain: Tol-Pal system protein TolB (425 aa).

The first 22 residues, 1–22, serve as a signal peptide directing secretion; the sequence is MRNFLYCTGVLLLLWMSTSSQA.

This sequence belongs to the TolB family. The Tol-Pal system is composed of five core proteins: the inner membrane proteins TolA, TolQ and TolR, the periplasmic protein TolB and the outer membrane protein Pal. They form a network linking the inner and outer membranes and the peptidoglycan layer.

It localises to the periplasm. Part of the Tol-Pal system, which plays a role in outer membrane invagination during cell division and is important for maintaining outer membrane integrity. The chain is Tol-Pal system protein TolB from Nitrosomonas europaea (strain ATCC 19718 / CIP 103999 / KCTC 2705 / NBRC 14298).